A 212-amino-acid polypeptide reads, in one-letter code: Large ribosomal subunit protein uL3 (212 aa).

Gln-152 is modified (N5-methylglutamine).

The protein belongs to the universal ribosomal protein uL3 family. As to quaternary structure, part of the 50S ribosomal subunit. Forms a cluster with proteins L14 and L19. Methylated by PrmB.

Its function is as follows. One of the primary rRNA binding proteins, it binds directly near the 3'-end of the 23S rRNA, where it nucleates assembly of the 50S subunit. The chain is Large ribosomal subunit protein uL3 from Chromohalobacter salexigens (strain ATCC BAA-138 / DSM 3043 / CIP 106854 / NCIMB 13768 / 1H11).